The sequence spans 353 residues: UDP-3-O-acylglucosamine N-acyltransferase (353 aa).

Residue His242 is the Proton acceptor of the active site.

This sequence belongs to the transferase hexapeptide repeat family. LpxD subfamily. As to quaternary structure, homotrimer.

It carries out the reaction a UDP-3-O-[(3R)-3-hydroxyacyl]-alpha-D-glucosamine + a (3R)-hydroxyacyl-[ACP] = a UDP-2-N,3-O-bis[(3R)-3-hydroxyacyl]-alpha-D-glucosamine + holo-[ACP] + H(+). It participates in bacterial outer membrane biogenesis; LPS lipid A biosynthesis. Catalyzes the N-acylation of UDP-3-O-acylglucosamine using 3-hydroxyacyl-ACP as the acyl donor. Is involved in the biosynthesis of lipid A, a phosphorylated glycolipid that anchors the lipopolysaccharide to the outer membrane of the cell. The polypeptide is UDP-3-O-acylglucosamine N-acyltransferase (Pseudomonas aeruginosa (strain UCBPP-PA14)).